A 455-amino-acid chain; its full sequence is Ribulose bisphosphate carboxylase large chain (455 aa).

K5 carries the N6,N6,N6-trimethyllysine modification. Substrate contacts are provided by N114 and T164. The active-site Proton acceptor is K166. K168 contributes to the substrate binding site. Mg(2+)-binding residues include K192, D194, and E195. K192 carries the N6-carboxylysine modification. The Proton acceptor role is filled by H285. The substrate site is built by R286, H318, and S370.

The protein belongs to the RuBisCO large chain family. Type I subfamily. As to quaternary structure, heterohexadecamer of 8 large chains and 8 small chains; disulfide-linked. The disulfide link is formed within the large subunit homodimers. The cofactor is Mg(2+). The disulfide bond which can form in the large chain dimeric partners within the hexadecamer appears to be associated with oxidative stress and protein turnover.

The protein localises to the plastid. Its subcellular location is the chloroplast. It catalyses the reaction 2 (2R)-3-phosphoglycerate + 2 H(+) = D-ribulose 1,5-bisphosphate + CO2 + H2O. The enzyme catalyses D-ribulose 1,5-bisphosphate + O2 = 2-phosphoglycolate + (2R)-3-phosphoglycerate + 2 H(+). In terms of biological role, ruBisCO catalyzes two reactions: the carboxylation of D-ribulose 1,5-bisphosphate, the primary event in carbon dioxide fixation, as well as the oxidative fragmentation of the pentose substrate in the photorespiration process. Both reactions occur simultaneously and in competition at the same active site. This is Ribulose bisphosphate carboxylase large chain from Lupinus microcarpus var. densiflorus (Whitewhorl lupine).